Reading from the N-terminus, the 553-residue chain is Coiled-coil domain-containing protein 85A (553 aa).

Low complexity predominate over residues 1 to 28; the sequence is MSKAAGGAAAAAAAAESCSPAPAGSSAA. Residues 1 to 37 form a disordered region; it reads MSKAAGGAAAAAAAAESCSPAPAGSSAAPPAPVEDLS. Coiled coils occupy residues 43–109 and 137–169; these read ELLQ…RDLC and MHKEVALYLQKLKDLEVKQEEVVKENMELKELC. 3 disordered regions span residues 203–414, 433–461, and 491–518; these read YVRD…GMNE, ENRMLPQASQNRRQPPTRNSSNMEKGWGS, and SGADGSNSSPNSAASFSGHATPSQQPEP. Over residues 209-220 the composition is skewed to low complexity; it reads DGSSTSSTGSTD. The segment covering 236–260 has biased composition (basic and acidic residues); the sequence is HLQKPRSEGSPEHSKHRSASPEHPQ. A compositionally biased stretch (gly residues) spans 376–389; the sequence is GGSGGSGGSGGGSR. Residues 391–403 are compositionally biased toward basic and acidic residues; it reads GTLRRQAQEDGSP. Residues 412–443 are a coiled coil; that stretch reads MNESTLSYVRQLEARVRQLEEENRMLPQASQN. Polar residues predominate over residues 439–455; that stretch reads QASQNRRQPPTRNSSNM. Residues 491-508 are compositionally biased toward low complexity; that stretch reads SGADGSNSSPNSAASFSG. Arg-541 carries the asymmetric dimethylarginine modification.

Belongs to the CCDC85 family. As to quaternary structure, may interact with ARVCF; CTNND1; CTNND2 and PKP4.

The protein resides in the cell junction. Its subcellular location is the adherens junction. In terms of biological role, may play a role in cell-cell adhesion and epithelium development through its interaction with proteins of the beta-catenin family. The protein is Coiled-coil domain-containing protein 85A (CCDC85A) of Homo sapiens (Human).